Reading from the N-terminus, the 393-residue chain is Aspartate aminotransferase (393 aa).

L-aspartate-binding residues include Gly-38, Trp-124, and Asn-174. An N6-(pyridoxal phosphate)lysine modification is found at Lys-237.

Belongs to the class-I pyridoxal-phosphate-dependent aminotransferase family. In terms of assembly, homodimer. Pyridoxal 5'-phosphate serves as cofactor.

The protein localises to the cytoplasm. The enzyme catalyses L-aspartate + 2-oxoglutarate = oxaloacetate + L-glutamate. This chain is Aspartate aminotransferase (aspB), found in Bacillus subtilis (strain 168).